Here is a 557-residue protein sequence, read N- to C-terminus: Urocanate hydratase (557 aa).

NAD(+)-binding positions include 53–54 (GG), Q131, 177–179 (GMG), E197, R202, 243–244 (NA), 264–268 (QTSAH), 274–275 (YL), and Y323. C411 is a catalytic residue. G493 contributes to the NAD(+) binding site.

It belongs to the urocanase family. Requires NAD(+) as cofactor.

Its subcellular location is the cytoplasm. The catalysed reaction is 4-imidazolone-5-propanoate = trans-urocanate + H2O. Its pathway is amino-acid degradation; L-histidine degradation into L-glutamate; N-formimidoyl-L-glutamate from L-histidine: step 2/3. In terms of biological role, catalyzes the conversion of urocanate to 4-imidazolone-5-propionate. The polypeptide is Urocanate hydratase (Pseudomonas putida (strain GB-1)).